The following is a 521-amino-acid chain: uncharacterized protein (521 aa).

A signal peptide spans 1–22 (MGFKLKGFGFLTLFASQAFLTA). Cys-23 carries N-palmitoyl cysteine lipidation. Cys-23 is lipidated: S-diacylglycerol cysteine.

This sequence belongs to the MG067/MG068/MG395 family.

The protein localises to the cell membrane. This is an uncharacterized protein from Mycoplasma pneumoniae (strain ATCC 29342 / M129 / Subtype 1) (Mycoplasmoides pneumoniae).